The sequence spans 151 residues: Large ribosomal subunit protein bL9 (151 aa).

It belongs to the bacterial ribosomal protein bL9 family.

Its function is as follows. Binds to the 23S rRNA. This is Large ribosomal subunit protein bL9 from Nitrosospira multiformis (strain ATCC 25196 / NCIMB 11849 / C 71).